Reading from the N-terminus, the 394-residue chain is 1-deoxy-D-xylulose 5-phosphate reductoisomerase (394 aa).

NADPH-binding residues include T10, G11, S12, I13, N38, and N125. 1-deoxy-D-xylulose 5-phosphate is bound at residue K126. NADPH is bound at residue E127. D151 is a Mn(2+) binding site. 1-deoxy-D-xylulose 5-phosphate contacts are provided by S152, E153, S182, and H205. E153 lines the Mn(2+) pocket. G211 contacts NADPH. S218, N223, K224, and E227 together coordinate 1-deoxy-D-xylulose 5-phosphate. Residue E227 participates in Mn(2+) binding.

Belongs to the DXR family. The cofactor is Mg(2+). Mn(2+) is required as a cofactor.

The enzyme catalyses 2-C-methyl-D-erythritol 4-phosphate + NADP(+) = 1-deoxy-D-xylulose 5-phosphate + NADPH + H(+). It participates in isoprenoid biosynthesis; isopentenyl diphosphate biosynthesis via DXP pathway; isopentenyl diphosphate from 1-deoxy-D-xylulose 5-phosphate: step 1/6. Catalyzes the NADPH-dependent rearrangement and reduction of 1-deoxy-D-xylulose-5-phosphate (DXP) to 2-C-methyl-D-erythritol 4-phosphate (MEP). The chain is 1-deoxy-D-xylulose 5-phosphate reductoisomerase from Methylococcus capsulatus (strain ATCC 33009 / NCIMB 11132 / Bath).